Consider the following 26-residue polypeptide: Mitochondrial import receptor subunit TOM7-2 (26 aa).

This sequence belongs to the Tom7 family. In terms of assembly, forms part of the preprotein translocase complex of the outer mitochondrial membrane (TOM complex).

The protein localises to the mitochondrion outer membrane. Its function is as follows. Seems to act as a modulator of the dynamics of the mitochondrial protein transport machinery. Seems to promote the dissociation of subunits of the outer membrane translocase. The chain is Mitochondrial import receptor subunit TOM7-2 (TOM7-2) from Solanum tuberosum (Potato).